Consider the following 240-residue polypeptide: Orotidine 5'-phosphate decarboxylase (240 aa).

Substrate contacts are provided by residues D15, K37, 64–73 (DLKYHDIPNT), T125, R186, Q195, G215, and R216. K66 (proton donor) is an active-site residue.

Belongs to the OMP decarboxylase family. Type 1 subfamily. Homodimer.

The enzyme catalyses orotidine 5'-phosphate + H(+) = UMP + CO2. It functions in the pathway pyrimidine metabolism; UMP biosynthesis via de novo pathway; UMP from orotate: step 2/2. In terms of biological role, catalyzes the decarboxylation of orotidine 5'-monophosphate (OMP) to uridine 5'-monophosphate (UMP). The chain is Orotidine 5'-phosphate decarboxylase from Pelobacter propionicus (strain DSM 2379 / NBRC 103807 / OttBd1).